Consider the following 321-residue polypeptide: Aspartate carbamoyltransferase catalytic subunit (321 aa).

Positions 60 and 61 each coordinate carbamoyl phosphate. K88 lines the L-aspartate pocket. Residues R110, H138, and Q141 each coordinate carbamoyl phosphate. 2 residues coordinate L-aspartate: R171 and R225. Carbamoyl phosphate is bound by residues G266 and P267.

It belongs to the aspartate/ornithine carbamoyltransferase superfamily. ATCase family. Heterododecamer (2C3:3R2) of six catalytic PyrB chains organized as two trimers (C3), and six regulatory PyrI chains organized as three dimers (R2).

The catalysed reaction is carbamoyl phosphate + L-aspartate = N-carbamoyl-L-aspartate + phosphate + H(+). The protein operates within pyrimidine metabolism; UMP biosynthesis via de novo pathway; (S)-dihydroorotate from bicarbonate: step 2/3. Its function is as follows. Catalyzes the condensation of carbamoyl phosphate and aspartate to form carbamoyl aspartate and inorganic phosphate, the committed step in the de novo pyrimidine nucleotide biosynthesis pathway. The protein is Aspartate carbamoyltransferase catalytic subunit of Sorangium cellulosum (strain So ce56) (Polyangium cellulosum (strain So ce56)).